The following is a 409-amino-acid chain: L-cysteine:1D-myo-inositol 2-amino-2-deoxy-alpha-D-glucopyranoside ligase (409 aa).

Position 25 (Cys-25) interacts with Zn(2+). L-cysteinyl-5'-AMP-binding positions include 25–28 (CGIT), Thr-40, and 63–65 (NVT). Residues 27-37 (ITPYDATHIGH) carry the 'HIGH' region motif. The short motif at 179–184 (ERGGDP) is the 'ERGGDP' region element. Trp-219 lines the L-cysteinyl-5'-AMP pocket. Cys-223 serves as a coordination point for Zn(2+). 241–243 (GSD) provides a ligand contact to L-cysteinyl-5'-AMP. His-248 lines the Zn(2+) pocket. Val-274 contributes to the L-cysteinyl-5'-AMP binding site. The short motif at 280-284 (KMSKS) is the 'KMSKS' region element.

Belongs to the class-I aminoacyl-tRNA synthetase family. MshC subfamily. Monomer. Zn(2+) is required as a cofactor.

The enzyme catalyses 1D-myo-inositol 2-amino-2-deoxy-alpha-D-glucopyranoside + L-cysteine + ATP = 1D-myo-inositol 2-(L-cysteinylamino)-2-deoxy-alpha-D-glucopyranoside + AMP + diphosphate + H(+). Functionally, catalyzes the ATP-dependent condensation of GlcN-Ins and L-cysteine to form L-Cys-GlcN-Ins. The polypeptide is L-cysteine:1D-myo-inositol 2-amino-2-deoxy-alpha-D-glucopyranoside ligase (Clavibacter sepedonicus (Clavibacter michiganensis subsp. sepedonicus)).